The chain runs to 145 residues: Group IID secretory phospholipase A2 (145 aa).

The signal sequence occupies residues 1–20; it reads MELALLCGLVVMAGVIPIQG. Intrachain disulfides connect Cys-46/Cys-138, Cys-48/Cys-64, Cys-63/Cys-118, Cys-69/Cys-145, Cys-70/Cys-111, Cys-79/Cys-104, and Cys-97/Cys-109. His-47, Gly-49, and Gly-51 together coordinate Ca(2+). His-67 is an active-site residue. Asp-68 provides a ligand contact to Ca(2+). N-linked (GlcNAc...) asparagine glycosylation occurs at Asn-89. The active site involves Asp-112.

It belongs to the phospholipase A2 family. It depends on Ca(2+) as a cofactor. As to expression, highly expressed in pancreas and spleen and less abundantly in colon, thymus, placenta, small intestine, and prostate.

It localises to the secreted. It carries out the reaction a 1,2-diacyl-sn-glycero-3-phosphoethanolamine + H2O = a 1-acyl-sn-glycero-3-phosphoethanolamine + a fatty acid + H(+). It catalyses the reaction 1-hexadecanoyl-2-(9Z-octadecenoyl)-sn-glycero-3-phosphoethanolamine + H2O = 1-hexadecanoyl-sn-glycero-3-phosphoethanolamine + (9Z)-octadecenoate + H(+). The enzyme catalyses 1-hexadecanoyl-2-(9Z,12Z-octadecadienoyl)-sn-glycero-3-phosphoethanolamine + H2O = 1-hexadecanoyl-sn-glycero-3-phosphoethanolamine + (9Z,12Z)-octadecadienoate + H(+). The catalysed reaction is 1,2-dihexadecanoyl-sn-glycero-3-phospho-(1'-sn-glycerol) + H2O = 1-hexadecanoyl-sn-glycero-3-phospho-(1'-sn-glycerol) + hexadecanoate + H(+). It carries out the reaction 1-hexadecanoyl-2-(9Z-octadecenoyl)-sn-glycero-3-phospho-(1'-sn-glycerol) + H2O = 1-hexadecanoyl-sn-glycero-3-phospho-(1'-sn-glycerol) + (9Z)-octadecenoate + H(+). It catalyses the reaction a 1,2-diacyl-sn-glycero-3-phosphocholine + H2O = a 1-acyl-sn-glycero-3-phosphocholine + a fatty acid + H(+). The enzyme catalyses 1,2-dihexadecanoyl-sn-glycero-3-phosphocholine + H2O = 1-hexadecanoyl-sn-glycero-3-phosphocholine + hexadecanoate + H(+). The catalysed reaction is 1-hexadecanoyl-2-(9Z-octadecenoyl)-sn-glycero-3-phosphocholine + H2O = 1-hexadecanoyl-sn-glycero-3-phosphocholine + (9Z)-octadecenoate + H(+). It carries out the reaction 1-hexadecanoyl-2-(9Z,12Z-octadecadienoyl)-sn-glycero-3-phosphocholine + H2O = (9Z,12Z)-octadecadienoate + 1-hexadecanoyl-sn-glycero-3-phosphocholine + H(+). It catalyses the reaction 1-hexadecanoyl-2-(4Z,7Z,10Z,13Z,16Z,19Z-docosahexaenoyl)-sn-glycero-3-phosphocholine + H2O = (4Z,7Z,10Z,13Z,16Z,19Z)-docosahexaenoate + 1-hexadecanoyl-sn-glycero-3-phosphocholine + H(+). Its function is as follows. Secretory calcium-dependent phospholipase A2 that primarily targets extracellular lipids, exerting anti-inflammatory and immunosuppressive functions. Hydrolyzes the ester bond of the fatty acyl group attached at sn-2 position of phospholipids (phospholipase A2 activity) with preference for phosphatidylethanolamines and phosphatidylglycerols over phosphatidylcholines. In draining lymph nodes, selectively hydrolyzes diacyl and alkenyl forms of phosphatidylethanolamines, releasing omega-3 polyunsaturated fatty acids (PUFAs) such as eicosapentaenoate and docosahexaenoate that are precursors of the anti-inflammatory lipid mediators, resolvins. During the resolution phase of acute inflammation drives docosahexaenoate-derived resolvin D1 synthesis, which suppresses dendritic cell activation and T-helper 1 immune response. May act in an autocrine and paracrine manner. Via a mechanism independent of its catalytic activity, promotes differentiation of regulatory T cells (Tregs) and participates in the maintenance of immune tolerance. May contribute to lipid remodeling of cellular membranes and generation of lipid mediators involved in pathogen clearance. Displays bactericidal activity against Gram-positive bacteria by directly hydrolyzing phospholipids of the bacterial membrane. The protein is Group IID secretory phospholipase A2 (PLA2G2D) of Homo sapiens (Human).